We begin with the raw amino-acid sequence, 350 residues long: Anthranilate phosphoribosyltransferase (350 aa).

5-phospho-alpha-D-ribose 1-diphosphate-binding positions include G93, 96–97 (GD), T101, 103–106 (NIST), 121–129 (KHGNRSASG), and S133. G93 serves as a coordination point for anthranilate. S105 is a Mg(2+) binding site. N124 serves as a coordination point for anthranilate. R179 serves as a coordination point for anthranilate. D238 and E239 together coordinate Mg(2+).

It belongs to the anthranilate phosphoribosyltransferase family. Homodimer. It depends on Mg(2+) as a cofactor.

The enzyme catalyses N-(5-phospho-beta-D-ribosyl)anthranilate + diphosphate = 5-phospho-alpha-D-ribose 1-diphosphate + anthranilate. It functions in the pathway amino-acid biosynthesis; L-tryptophan biosynthesis; L-tryptophan from chorismate: step 2/5. Functionally, catalyzes the transfer of the phosphoribosyl group of 5-phosphorylribose-1-pyrophosphate (PRPP) to anthranilate to yield N-(5'-phosphoribosyl)-anthranilate (PRA). The polypeptide is Anthranilate phosphoribosyltransferase (Parasynechococcus marenigrum (strain WH8102)).